Reading from the N-terminus, the 458-residue chain is ATP synthase subunit beta (458 aa).

148-155 (GGAGVGKT) contacts ATP.

Belongs to the ATPase alpha/beta chains family. F-type ATPases have 2 components, CF(1) - the catalytic core - and CF(0) - the membrane proton channel. CF(1) has five subunits: alpha(3), beta(3), gamma(1), delta(1), epsilon(1). CF(0) has three main subunits: a(1), b(2) and c(9-12). The alpha and beta chains form an alternating ring which encloses part of the gamma chain. CF(1) is attached to CF(0) by a central stalk formed by the gamma and epsilon chains, while a peripheral stalk is formed by the delta and b chains.

The protein resides in the cell inner membrane. The enzyme catalyses ATP + H2O + 4 H(+)(in) = ADP + phosphate + 5 H(+)(out). In terms of biological role, produces ATP from ADP in the presence of a proton gradient across the membrane. The catalytic sites are hosted primarily by the beta subunits. The protein is ATP synthase subunit beta of Alkalilimnicola ehrlichii (strain ATCC BAA-1101 / DSM 17681 / MLHE-1).